The primary structure comprises 246 residues: E3 ubiquitin ligase TRIM40 (246 aa).

The RING-type zinc-finger motif lies at 12–55 (CPICLDPLKEAVSTDCRHLFCRMCLTQHMDKASVSGILSCPVCR). The B box-type zinc finger occupies 64 to 105 (GDNYICHTHQKRVRRFCEASGHLLCEECLQSPEHQSHTELSI). Cysteine 69, histidine 72, cysteine 91, and histidine 97 together coordinate Zn(2+). A coiled-coil region spans residues 105–170 (IENAISHYKE…DQTKEQLKAL (66 aa)).

It belongs to the TRIM/RBCC family. In terms of assembly, interacts with NEDD8.

It catalyses the reaction S-ubiquitinyl-[E2 ubiquitin-conjugating enzyme]-L-cysteine + [acceptor protein]-L-lysine = [E2 ubiquitin-conjugating enzyme]-L-cysteine + N(6)-ubiquitinyl-[acceptor protein]-L-lysine.. In terms of biological role, E3 ubiquitin-protein ligase that plays a role in the limitation of the innate immune response. Mediates inhibition of the RLR signaling pathway by ubiquitinating RIGI and IFIH1 receptors, leading to their proteasomal degradation. Also promotes the neddylation of IKBKG/NEMO, stabilizing NFKBIA, and thereby inhibiting of NF-kappa-B nuclear translocation and activation. The chain is E3 ubiquitin ligase TRIM40 (Trim40) from Mus musculus (Mouse).